The following is a 228-amino-acid chain: Extracellular protease inhibitor 10 (228 aa).

The signal sequence occupies residues 1–22; that stretch reads MKSAFTLSLALVAVTATISAAA. Kazal-like domains follow at residues 23 to 72, 90 to 127, and 156 to 208; these read DDNC…ECAS, TSGT…AKCK, and GYQG…EGTL. A glycan (N-linked (GlcNAc...) asparagine) is linked at Asn-25. 3 disulfides stabilise this stretch: Cys-26/Cys-56, Cys-30/Cys-49, and Cys-38/Cys-70. The interval 69–92 is disordered; the sequence is ECASTPASSATPSPVTSSTGSTSG. The span at 71 to 92 shows a compositional bias: low complexity; it reads ASTPASSATPSPVTSSTGSTSG. Intrachain disulfides connect Cys-96-Cys-126, Cys-100-Cys-119, Cys-162-Cys-193, and Cys-167-Cys-186. The N-linked (GlcNAc...) asparagine glycan is linked to Asn-199.

Interacts with host subtilisin-like protease P69B.

The protein resides in the secreted. Its function is as follows. Secreted effector that interacts with and inhibits the pathogenesis-related P69B subtilisin-like serine protease of host tomato. Inhibition of host proteases by a pathogen extracellular protease inhibitor forms a specific type of defense-counterdefense mechanism between plants and microbial pathogens. This chain is Extracellular protease inhibitor 10, found in Phytophthora infestans (strain T30-4) (Potato late blight agent).